The chain runs to 277 residues: 3-methyl-2-oxobutanoate hydroxymethyltransferase (277 aa).

Mg(2+)-binding residues include aspartate 43 and aspartate 82. Residues 43-44, aspartate 82, and lysine 112 each bind 3-methyl-2-oxobutanoate; that span reads DS. Glutamate 114 is a Mg(2+) binding site. Glutamate 181 serves as the catalytic Proton acceptor.

The protein belongs to the PanB family. As to quaternary structure, homodecamer; pentamer of dimers. Mg(2+) serves as cofactor.

The protein resides in the cytoplasm. It catalyses the reaction 3-methyl-2-oxobutanoate + (6R)-5,10-methylene-5,6,7,8-tetrahydrofolate + H2O = 2-dehydropantoate + (6S)-5,6,7,8-tetrahydrofolate. Its pathway is cofactor biosynthesis; (R)-pantothenate biosynthesis; (R)-pantoate from 3-methyl-2-oxobutanoate: step 1/2. In terms of biological role, catalyzes the reversible reaction in which hydroxymethyl group from 5,10-methylenetetrahydrofolate is transferred onto alpha-ketoisovalerate to form ketopantoate. The polypeptide is 3-methyl-2-oxobutanoate hydroxymethyltransferase (Bacillus velezensis (strain DSM 23117 / BGSC 10A6 / LMG 26770 / FZB42) (Bacillus amyloliquefaciens subsp. plantarum)).